The following is a 284-amino-acid chain: Putative thiosulfate sulfurtransferase SseB (284 aa).

Rhodanese domains follow at residues 20–138 (AGDP…SIET) and 169–280 (GAGG…RPVG). Arg183 is a substrate binding site. The active-site Cysteine persulfide intermediate is Cys241.

It catalyses the reaction thiosulfate + hydrogen cyanide = thiocyanate + sulfite + 2 H(+). In Mycobacterium tuberculosis (strain CDC 1551 / Oshkosh), this protein is Putative thiosulfate sulfurtransferase SseB (sseB).